A 235-amino-acid polypeptide reads, in one-letter code: Large ribosomal subunit protein uL1 (235 aa).

The protein belongs to the universal ribosomal protein uL1 family. In terms of assembly, part of the 50S ribosomal subunit.

Binds directly to 23S rRNA. The L1 stalk is quite mobile in the ribosome, and is involved in E site tRNA release. Its function is as follows. Protein L1 is also a translational repressor protein, it controls the translation of the L11 operon by binding to its mRNA. In Parasynechococcus marenigrum (strain WH8102), this protein is Large ribosomal subunit protein uL1.